The following is a 491-amino-acid chain: Malonate-semialdehyde dehydrogenase 1 (491 aa).

7 residues coordinate NAD(+): Ala-154, Phe-156, Lys-180, Glu-183, Arg-184, Ser-233, and Thr-255. Cys-288 serves as the catalytic Nucleophile. Glu-386 is a binding site for NAD(+).

This sequence belongs to the aldehyde dehydrogenase family. IolA subfamily. In terms of assembly, homotetramer.

It catalyses the reaction 3-oxopropanoate + NAD(+) + CoA + H2O = hydrogencarbonate + acetyl-CoA + NADH + H(+). The catalysed reaction is 2-methyl-3-oxopropanoate + NAD(+) + CoA + H2O = propanoyl-CoA + hydrogencarbonate + NADH + H(+). It participates in polyol metabolism; myo-inositol degradation into acetyl-CoA; acetyl-CoA from myo-inositol: step 7/7. In terms of biological role, catalyzes the oxidation of malonate semialdehyde (MSA) and methylmalonate semialdehyde (MMSA) into acetyl-CoA and propanoyl-CoA, respectively. Is involved in a myo-inositol catabolic pathway. Bicarbonate, and not CO2, is the end-product of the enzymatic reaction. In Shouchella clausii (strain KSM-K16) (Alkalihalobacillus clausii), this protein is Malonate-semialdehyde dehydrogenase 1.